The chain runs to 522 residues: Probable mannosyltransferase KTR5 (522 aa).

Topologically, residues 1–16 are cytoplasmic; it reads MLLIRRTINAFLGCIH. A helical; Signal-anchor for type II membrane protein membrane pass occupies residues 17–37; it reads CNLTATCILIAFVITMYVVLV. The tract at residues 38-82 is stem region; the sequence is SEPASVDGTMGNFLPFSKMDLATKRDRPFYSNCVNTQDYLLNPSY. The Lumenal portion of the chain corresponds to 38–522; it reads SEPASVDGTM…REDYLRQFGN (485 aa). The interval 83–522 is catalytic; sequence IKQNASFVML…REDYLRQFGN (440 aa). Asparagine 86 carries N-linked (GlcNAc...) asparagine glycosylation. Glutamate 363 acts as the Nucleophile in catalysis.

It belongs to the glycosyltransferase 15 family.

The protein resides in the membrane. Its function is as follows. Possible glycosyltransferase that transfers an alpha-D-mannosyl residue from GDP-mannose into lipid-linked oligosaccharide, forming an alpha-(1-&gt;2)-D-mannosyl-D-mannose linkage. The protein is Probable mannosyltransferase KTR5 (KTR5) of Saccharomyces cerevisiae (strain ATCC 204508 / S288c) (Baker's yeast).